Here is a 584-residue protein sequence, read N- to C-terminus: Glycosyltransferase family 92 protein Os08g0121900 (584 aa).

Residues 1-10 (MALAAKERKL) show a composition bias toward basic and acidic residues. Residues 1-33 (MALAAKERKLSRLGSKGSGGGGGGGSFGARGQR) are disordered. Positions 16–28 (KGSGGGGGGGSFG) are enriched in gly residues. Residues 43–63 (FAAFFAFLFAGAVLFGAAHVI) traverse the membrane as a helical segment. In terms of domain architecture, GT92 spans 314–525 (HSMCVCTMLR…DKFSGRVATY (212 aa)).

The protein belongs to the glycosyltransferase 92 family.

The protein resides in the membrane. In Oryza sativa subsp. japonica (Rice), this protein is Glycosyltransferase family 92 protein Os08g0121900.